Reading from the N-terminus, the 88-residue chain is Putative regulatory protein DvMF_1139 (88 aa).

It belongs to the RemA family.

This chain is Putative regulatory protein DvMF_1139, found in Nitratidesulfovibrio vulgaris (strain DSM 19637 / Miyazaki F) (Desulfovibrio vulgaris).